A 41-amino-acid chain; its full sequence is Large ribosomal subunit protein bL36 (41 aa).

This sequence belongs to the bacterial ribosomal protein bL36 family.

In Rickettsia canadensis (strain McKiel), this protein is Large ribosomal subunit protein bL36.